Consider the following 1167-residue polypeptide: RNA-directed RNA polymerase (1167 aa).

The RdRp catalytic domain occupies 553–735 (LTYGILAEAT…KALASYTGLE (183 aa)).

Belongs to the reoviridae RNA-directed RNA polymerase family. As to quaternary structure, interacts with VP3 (Potential). Interacts with VP2 (Potential). Interacts with NSP5; this interaction is probably necessary for the formation of functional virus factories.

It is found in the virion. The catalysed reaction is RNA(n) + a ribonucleoside 5'-triphosphate = RNA(n+1) + diphosphate. Its function is as follows. RNA-directed RNA polymerase that is involved in both transcription and genome replication. Together with VP3 capping enzyme, forms an enzyme complex positioned near the channels situated at each of the five-fold vertices of the core. Following infection, the outermost layer of the virus is lost, leaving a double-layered particle (DLP) made up of the core and VP6 shell. VP1 then catalyzes the transcription of fully conservative plus-strand genomic RNAs that are extruded through the DLP's channels into the cytoplasm where they function as mRNAs for translation of viral proteins. One copy of each of the viral (+)RNAs is also recruited during core assembly, together with newly synthesized polymerase complexes and VP2. The polymerase of these novo-formed particles catalyzes the synthesis of complementary minus-strands leading to dsDNA formation. To do so, the polymerase specifically recognizes conserved 3' sequence(s) in plus-strand RNA templates. Once dsRNA synthesis is complete, the polymerase switches to the transcriptional mode, thus providing secondary transcription. In Rotavirus X (strain RVX/Human/China/NADRV-J19/1997/GXP[X]) (RV ADRV-N), this protein is RNA-directed RNA polymerase.